We begin with the raw amino-acid sequence, 372 residues long: 4-hydroxybenzoate polyprenyltransferase, mitochondrial (372 aa).

The N-terminal 42 residues, 1-42, are a transit peptide targeting the mitochondrion; that stretch reads MFIWQRKSILLGRSILGSGRVTVAGIIGSSRKRYTSSSSSSS. 7 consecutive transmembrane segments (helical) span residues 92 to 112, 114 to 134, 171 to 191, 193 to 213, 229 to 249, 298 to 318, and 352 to 372; these read PVGT…GAMM, GATL…ALVM, ALVF…LLPA, CWWL…FKRF, ALLG…PLYL, IALL…GFIG, and TGLY…FGFL.

Belongs to the UbiA prenyltransferase family. The cofactor is Mg(2+).

Its subcellular location is the mitochondrion inner membrane. The enzyme catalyses an all-trans-polyprenyl diphosphate + 4-hydroxybenzoate = a 4-hydroxy-3-(all-trans-polyprenyl)benzoate + diphosphate. The protein operates within cofactor biosynthesis; ubiquinone biosynthesis. In terms of biological role, catalyzes the prenylation of para-hydroxybenzoate (PHB) with an all-trans polyprenyl group. Mediates the second step in the final reaction sequence of coenzyme Q (CoQ) biosynthesis, which is the condensation of the polyisoprenoid side chain with PHB, generating the first membrane-bound Q intermediate. The polypeptide is 4-hydroxybenzoate polyprenyltransferase, mitochondrial (Saccharomyces cerevisiae (strain ATCC 204508 / S288c) (Baker's yeast)).